The primary structure comprises 335 residues: Mycobacterial beta-ketoacyl-[acyl-carrier-protein] synthase III (335 aa).

Catalysis depends on residues Cys-122 and His-258. An ACP-binding region spans residues 259–263; that stretch reads QANSR. Asn-289 is a catalytic residue.

The protein belongs to the thiolase-like superfamily. FabH family. In terms of assembly, homodimer.

It localises to the cytoplasm. The enzyme catalyses malonyl-[ACP] + dodecanoyl-CoA + H(+) = 3-oxotetradecanoyl-[ACP] + CO2 + CoA. Its pathway is lipid metabolism; fatty acid biosynthesis. It functions in the pathway lipid metabolism; mycolic acid biosynthesis. Catalyzes the condensation reaction of fatty acid synthesis by the addition to an acyl acceptor of two carbons from malonyl-ACP. Catalyzes the first condensation reaction which initiates fatty acid synthesis and may therefore play a role in governing the total rate of fatty acid production. Possesses both acetoacetyl-ACP synthase and acetyl transacylase activities. Its substrate specificity determines the biosynthesis of branched-chain and/or straight-chain of fatty acids. The sequence is that of Mycobacterial beta-ketoacyl-[acyl-carrier-protein] synthase III from Mycobacterium bovis (strain ATCC BAA-935 / AF2122/97).